Consider the following 73-residue polypeptide: uncharacterized protein (73 aa).

It belongs to the asfivirus DP63R family.

This is an uncharacterized protein from Ornithodoros (relapsing fever ticks).